Consider the following 285-residue polypeptide: HTH-type transcriptional regulator MurR (285 aa).

An HTH rpiR-type domain is found at 1-77 (MLYLTKIRNA…MALIGEYSAS (77 aa)). The segment at residues 37–56 (SRKMAKQLGISQSSIVKFAQ) is a DNA-binding region (H-T-H motif). In terms of domain architecture, SIS spans 128–268 (IIEVISKAPF…FVGLVQLNDV (141 aa)).

As to quaternary structure, homotetramer.

The protein operates within amino-sugar metabolism; N-acetylmuramate degradation [regulation]. Represses the expression of the murPQ operon involved in the uptake and degradation of N-acetylmuramic acid (MurNAc). Binds to two adjacent inverted repeats within the operator region. MurNAc 6-phosphate, the substrate of MurQ, is the specific inducer that weakens binding of MurR to the operator. The protein is HTH-type transcriptional regulator MurR of Escherichia coli O9:H4 (strain HS).